The following is a 75-amino-acid chain: Sec-independent protein translocase protein TatA (75 aa).

A helical membrane pass occupies residues 1-21 (MGISIWQLLIVLGIVILLFGT). Residues 41–75 (SMSDEEEKNAEQQPLEKQNAEQQAQAEDKPKEKQG) are disordered. The span at 56-65 (EKQNAEQQAQ) shows a compositional bias: low complexity. Positions 66–75 (AEDKPKEKQG) are enriched in basic and acidic residues.

This sequence belongs to the TatA/E family. The Tat system comprises two distinct complexes: a TatABC complex, containing multiple copies of TatA, TatB and TatC subunits, and a separate TatA complex, containing only TatA subunits. Substrates initially bind to the TatABC complex, which probably triggers association of the separate TatA complex to form the active translocon.

The protein localises to the cell inner membrane. Functionally, part of the twin-arginine translocation (Tat) system that transports large folded proteins containing a characteristic twin-arginine motif in their signal peptide across membranes. TatA could form the protein-conducting channel of the Tat system. In Marinobacter nauticus (strain ATCC 700491 / DSM 11845 / VT8) (Marinobacter aquaeolei), this protein is Sec-independent protein translocase protein TatA.